A 115-amino-acid polypeptide reads, in one-letter code: ATP-dependent Clp protease adapter protein ClpS (115 aa).

It belongs to the ClpS family. In terms of assembly, binds to the N-terminal domain of the chaperone ClpA.

Involved in the modulation of the specificity of the ClpAP-mediated ATP-dependent protein degradation. In Leptothrix cholodnii (strain ATCC 51168 / LMG 8142 / SP-6) (Leptothrix discophora (strain SP-6)), this protein is ATP-dependent Clp protease adapter protein ClpS.